The primary structure comprises 735 residues: Muskelin (735 aa).

N-acetylalanine is present on Ala-2. A LisH domain is found at 172–204; it reads REQEAIRLCLKHFRQHNYTEAFESLQKKTKIAL. Positions 206-258 constitute a CTLH domain; sequence HPMLTDMHDKLVLKGDFDACEELIEKAVNDGLFNQYISQQEYKPRWSQIIPKS. Kelch repeat units lie at residues 284-330, 339-391, 400-458, 469-515, 526-578, and 597-651; these read TVYL…SCHK, QIYT…FDHQ, MIYT…SRIG, CLYV…TGFT, EIHV…SLQE, and VHYL…AQMD.

As to quaternary structure, homodimer; may form higher oligomers. Identified in the CTLH complex that contains GID4, RANBP9 and/or RANBP10, MKLN1, MAEA, RMND5A (or alternatively its paralog RMND5B), GID8, ARMC8, WDR26 and YPEL5. Within this complex, MAEA, RMND5A (or alternatively its paralog RMND5B), GID8, WDR26, and RANBP9 and/or RANBP10 form the catalytic core, while GID4, MKLN1, ARMC8 and YPEL5 have ancillary roles. Interacts with RANBP9. Part of a complex consisting of RANBP9, MKLN1 and GID8. Interacts with GABRA1. Interacts with the C-terminal tail of PTGER3.

It localises to the cytoplasm. The protein resides in the cell projection. The protein localises to the ruffle. Its subcellular location is the cell cortex. It is found in the synapse. It localises to the postsynapse. Component of the CTLH E3 ubiquitin-protein ligase complex that selectively accepts ubiquitin from UBE2H and mediates ubiquitination and subsequent proteasomal degradation of the transcription factor HBP1. Required for internalization of the GABA receptor GABRA1 from the cell membrane via endosomes and subsequent GABRA1 degradation. Acts as a mediator of cell spreading and cytoskeletal responses to the extracellular matrix component THBS1. The sequence is that of Muskelin (Mkln1) from Rattus norvegicus (Rat).